A 361-amino-acid chain; its full sequence is Queuine tRNA-ribosyltransferase (361 aa).

D92 (proton acceptor) is an active-site residue. Substrate is bound by residues 92–96, D146, Q189, and G216; that span reads DSGGF. The tract at residues 247-253 is RNA binding; the sequence is GVGKPAD. Catalysis depends on D266, which acts as the Nucleophile. Residues 271–275 form an RNA binding; important for wobble base 34 recognition region; that stretch reads TRSGR. 4 residues coordinate Zn(2+): C304, C306, C309, and H335.

The protein belongs to the queuine tRNA-ribosyltransferase family. In terms of assembly, homodimer. Within each dimer, one monomer is responsible for RNA recognition and catalysis, while the other monomer binds to the replacement base PreQ1. Zn(2+) serves as cofactor.

The catalysed reaction is 7-aminomethyl-7-carbaguanine + guanosine(34) in tRNA = 7-aminomethyl-7-carbaguanosine(34) in tRNA + guanine. It functions in the pathway tRNA modification; tRNA-queuosine biosynthesis. Functionally, catalyzes the base-exchange of a guanine (G) residue with the queuine precursor 7-aminomethyl-7-deazaguanine (PreQ1) at position 34 (anticodon wobble position) in tRNAs with GU(N) anticodons (tRNA-Asp, -Asn, -His and -Tyr). Catalysis occurs through a double-displacement mechanism. The nucleophile active site attacks the C1' of nucleotide 34 to detach the guanine base from the RNA, forming a covalent enzyme-RNA intermediate. The proton acceptor active site deprotonates the incoming PreQ1, allowing a nucleophilic attack on the C1' of the ribose to form the product. After dissociation, two additional enzymatic reactions on the tRNA convert PreQ1 to queuine (Q), resulting in the hypermodified nucleoside queuosine (7-(((4,5-cis-dihydroxy-2-cyclopenten-1-yl)amino)methyl)-7-deazaguanosine). This Rickettsia canadensis (strain McKiel) protein is Queuine tRNA-ribosyltransferase.